We begin with the raw amino-acid sequence, 132 residues long: Large ribosomal subunit protein bL19 (132 aa).

This sequence belongs to the bacterial ribosomal protein bL19 family.

Its function is as follows. This protein is located at the 30S-50S ribosomal subunit interface and may play a role in the structure and function of the aminoacyl-tRNA binding site. This is Large ribosomal subunit protein bL19 from Methylobacterium radiotolerans (strain ATCC 27329 / DSM 1819 / JCM 2831 / NBRC 15690 / NCIMB 10815 / 0-1).